The following is a 399-amino-acid chain: Argininosuccinate synthase (399 aa).

8–16 (AYSGGLDTS) is an ATP binding site. Tyrosine 87 serves as a coordination point for L-citrulline. An ATP-binding site is contributed by glycine 117. Residues threonine 119, asparagine 123, and aspartate 124 each contribute to the L-aspartate site. Asparagine 123 is an L-citrulline binding site. L-citrulline contacts are provided by arginine 127, serine 175, glutamate 260, and tyrosine 272.

This sequence belongs to the argininosuccinate synthase family. Type 1 subfamily. In terms of assembly, homotetramer.

The protein localises to the cytoplasm. The catalysed reaction is L-citrulline + L-aspartate + ATP = 2-(N(omega)-L-arginino)succinate + AMP + diphosphate + H(+). The protein operates within amino-acid biosynthesis; L-arginine biosynthesis; L-arginine from L-ornithine and carbamoyl phosphate: step 2/3. The protein is Argininosuccinate synthase of Mycolicibacterium smegmatis (strain ATCC 700084 / mc(2)155) (Mycobacterium smegmatis).